The following is a 444-amino-acid chain: tRNA modification GTPase MnmE (444 aa).

(6S)-5-formyl-5,6,7,8-tetrahydrofolate-binding residues include Arg24, Glu81, and Lys121. Positions 218–368 (GLTVVIAGPP…LLDALVGFAR (151 aa)) constitute a TrmE-type G domain. GTP contacts are provided by residues 228–233 (NAGKST), 247–253 (SPQAGTT), 272–275 (DTAG), and 349–351 (SAR). The Mg(2+) site is built by Ser232 and Thr253. Lys444 provides a ligand contact to (6S)-5-formyl-5,6,7,8-tetrahydrofolate.

This sequence belongs to the TRAFAC class TrmE-Era-EngA-EngB-Septin-like GTPase superfamily. TrmE GTPase family. Homodimer. Heterotetramer of two MnmE and two MnmG subunits. Requires K(+) as cofactor.

The protein localises to the cytoplasm. Exhibits a very high intrinsic GTPase hydrolysis rate. Involved in the addition of a carboxymethylaminomethyl (cmnm) group at the wobble position (U34) of certain tRNAs, forming tRNA-cmnm(5)s(2)U34. This is tRNA modification GTPase MnmE from Bradyrhizobium sp. (strain ORS 278).